The sequence spans 160 residues: Serine-protein kinase RsbW (160 aa).

Belongs to the anti-sigma-factor family.

The catalysed reaction is L-seryl-[protein] + ATP = O-phospho-L-seryl-[protein] + ADP + H(+). It catalyses the reaction L-threonyl-[protein] + ATP = O-phospho-L-threonyl-[protein] + ADP + H(+). Its function is as follows. Negative regulator of sigma-B activity. Phosphorylates and inactivates its specific antagonist protein, RsbV. Upon phosphorylation of RsbV, RsbW is released and binds to sigma-B, thereby blocking its ability to form an RNA polymerase holoenzyme (E-sigma-B). In Bacillus cereus (strain ATCC 10987 / NRS 248), this protein is Serine-protein kinase RsbW.